The primary structure comprises 1487 residues: Chromosome partition protein MukB (1487 aa).

Residue 34 to 41 (GGNGAGKS) participates in ATP binding. 5 coiled-coil regions span residues 297–426 (SSRE…LEKA), 460–666 (ALKH…RLAS), 781–806 (RAAREQRLELLRSEREEVVEKHAKAA), 836–1111 (EQAL…RTFV), and 1210–1266 (VEAI…LSNI). The segment at 667–784 (PGGSNDPRLK…VIPLFGRAAR (118 aa)) is flexible hinge.

Belongs to the SMC family. MukB subfamily. In terms of assembly, homodimerization via its hinge domain. Binds to DNA via its C-terminal region. Interacts, and probably forms a ternary complex, with MukE and MukF via its C-terminal region. The complex formation is stimulated by calcium or magnesium. Interacts with tubulin-related protein FtsZ.

The protein resides in the cytoplasm. It is found in the nucleoid. Plays a central role in chromosome condensation, segregation and cell cycle progression. Functions as a homodimer, which is essential for chromosome partition. Involved in negative DNA supercoiling in vivo, and by this means organize and compact chromosomes. May achieve or facilitate chromosome segregation by condensation DNA from both sides of a centrally located replisome during cell division. The protein is Chromosome partition protein MukB of Vibrio vulnificus (strain YJ016).